The following is a 667-amino-acid chain: UvrABC system protein B (667 aa).

Positions 24-195 (EGLRRGDRFQ…SSGGVFHLRG (172 aa)) constitute a Helicase ATP-binding domain. 37 to 44 (GVTGSGKT) contributes to the ATP binding site. A Beta-hairpin motif is present at residues 90 to 113 (YYDYYQPEAYIPTKDLYIEKDADI). The Helicase C-terminal domain occupies 428 to 581 (QVDDFIEEVQ…QLMYNIEHDI (154 aa)). The 36-residue stretch at 626 to 661 (EEYLALLEEEMWRASSELRYEDAAMLRDEMLRIKRE) folds into the UVR domain.

This sequence belongs to the UvrB family. Forms a heterotetramer with UvrA during the search for lesions. Interacts with UvrC in an incision complex.

Its subcellular location is the cytoplasm. Functionally, the UvrABC repair system catalyzes the recognition and processing of DNA lesions. A damage recognition complex composed of 2 UvrA and 2 UvrB subunits scans DNA for abnormalities. Upon binding of the UvrA(2)B(2) complex to a putative damaged site, the DNA wraps around one UvrB monomer. DNA wrap is dependent on ATP binding by UvrB and probably causes local melting of the DNA helix, facilitating insertion of UvrB beta-hairpin between the DNA strands. Then UvrB probes one DNA strand for the presence of a lesion. If a lesion is found the UvrA subunits dissociate and the UvrB-DNA preincision complex is formed. This complex is subsequently bound by UvrC and the second UvrB is released. If no lesion is found, the DNA wraps around the other UvrB subunit that will check the other stand for damage. The chain is UvrABC system protein B from Kosmotoga olearia (strain ATCC BAA-1733 / DSM 21960 / TBF 19.5.1).